A 175-amino-acid polypeptide reads, in one-letter code: uncharacterized protein (175 aa).

This is an uncharacterized protein from Acanthamoeba polyphaga (Amoeba).